Reading from the N-terminus, the 398-residue chain is Bone morphogenetic protein 2-A (398 aa).

A signal peptide spans Met-1–Gly-23. The propeptide occupies Leu-24 to Arg-284. N-linked (GlcNAc...) asparagine glycosylation is found at Asn-137, Asn-202, and Asn-340. Cystine bridges form between Cys-298–Cys-363, Cys-327–Cys-395, and Cys-331–Cys-397.

This sequence belongs to the TGF-beta family. As to quaternary structure, homodimer; disulfide-linked.

The protein resides in the secreted. Its function is as follows. Induces cartilage and bone formation. The chain is Bone morphogenetic protein 2-A (bmp2-a) from Xenopus laevis (African clawed frog).